The primary structure comprises 237 residues: Phosphoribosylaminoimidazole-succinocarboxamide synthase (237 aa).

The protein belongs to the SAICAR synthetase family.

It carries out the reaction 5-amino-1-(5-phospho-D-ribosyl)imidazole-4-carboxylate + L-aspartate + ATP = (2S)-2-[5-amino-1-(5-phospho-beta-D-ribosyl)imidazole-4-carboxamido]succinate + ADP + phosphate + 2 H(+). The protein operates within purine metabolism; IMP biosynthesis via de novo pathway; 5-amino-1-(5-phospho-D-ribosyl)imidazole-4-carboxamide from 5-amino-1-(5-phospho-D-ribosyl)imidazole-4-carboxylate: step 1/2. This chain is Phosphoribosylaminoimidazole-succinocarboxamide synthase, found in Campylobacter fetus subsp. fetus (strain 82-40).